Here is a 271-residue protein sequence, read N- to C-terminus: DNA-directed RNA polymerase subunit Rpo3 (271 aa).

Belongs to the archaeal Rpo3/eukaryotic RPB3 RNA polymerase subunit family. As to quaternary structure, part of the RNA polymerase complex.

It localises to the cytoplasm. It catalyses the reaction RNA(n) + a ribonucleoside 5'-triphosphate = RNA(n+1) + diphosphate. DNA-dependent RNA polymerase (RNAP) catalyzes the transcription of DNA into RNA using the four ribonucleoside triphosphates as substrates. The sequence is that of DNA-directed RNA polymerase subunit Rpo3 from Picrophilus torridus (strain ATCC 700027 / DSM 9790 / JCM 10055 / NBRC 100828 / KAW 2/3).